The sequence spans 277 residues: Leucine-rich repeat-containing protein 10 (277 aa).

7 LRR repeats span residues 53–74, 76–97, 99–120, 122–143, 145–167, 168–189, and 191–212; these read ELVK…LGQL, NLQI…VCTL, QLCI…LSLL, NLRT…VCEL, LLKT…RRLQ, ELRT…LLHM, and FLEV…AHLS.

The protein resides in the nucleus. In terms of biological role, may play important roles in cardiac development and/or cardiac function. This is Leucine-rich repeat-containing protein 10 (LRRC10) from Homo sapiens (Human).